Reading from the N-terminus, the 276-residue chain is NH(3)-dependent NAD(+) synthetase (276 aa).

43–50 (GISGGVDS) is an ATP binding site. A Mg(2+)-binding site is contributed by D49. R146 lines the deamido-NAD(+) pocket. Position 166 (T166) interacts with ATP. Residue E171 participates in Mg(2+) binding. K179 and D186 together coordinate deamido-NAD(+). ATP is bound by residues K195 and T217. 266–267 (HK) provides a ligand contact to deamido-NAD(+).

The protein belongs to the NAD synthetase family. In terms of assembly, homodimer.

The enzyme catalyses deamido-NAD(+) + NH4(+) + ATP = AMP + diphosphate + NAD(+) + H(+). The protein operates within cofactor biosynthesis; NAD(+) biosynthesis; NAD(+) from deamido-NAD(+) (ammonia route): step 1/1. Functionally, catalyzes the ATP-dependent amidation of deamido-NAD to form NAD. Uses ammonia as a nitrogen source. The chain is NH(3)-dependent NAD(+) synthetase from Aliivibrio salmonicida (strain LFI1238) (Vibrio salmonicida (strain LFI1238)).